A 194-amino-acid polypeptide reads, in one-letter code: uncharacterized protein (194 aa).

Belongs to the mimivirus R457/R459 family.

It is found in the virion. This is an uncharacterized protein from Acanthamoeba polyphaga mimivirus (APMV).